Reading from the N-terminus, the 336-residue chain is MATLHAPAFELPEILNTKTNLADARIGAQVIECSDDFFAEAKRMLQFEAPIFVEDKFDDHGKWMDGWETRRKRHAGYDWCIVKLGVSGKISALDIDTTFFTGNYPASASLEACYAPNGDLTGVTWQSILENTELGPSQHHIFMVNNDAIFTHIRLNIFPDGGVARLRVYGDVHIQVTDHEQTLDLLALENGGRVIAYSDAHFGHPRNLINPGRGVNMGDGWETKRRRAPGYDWCILALGKSGKIEKIEIDTAHFKGNFPAEVSIQAVYLENATDAQLIPQSMFWSYLLEAQPMQMDHIHEYVNEILKHEKISHIRINMIPDGGISRVRLWGKIAKS.

It belongs to the allantoicase family.

It catalyses the reaction allantoate + H2O = (S)-ureidoglycolate + urea. Its pathway is nitrogen metabolism; (S)-allantoin degradation; (S)-ureidoglycolate from allantoate (aminidohydrolase route): step 1/1. The sequence is that of Probable allantoicase from Acinetobacter baumannii (strain AYE).